The sequence spans 421 residues: MPPGSWWLVLWLPPLATLPAGAVPQEEAAMSVPRCKSLKETDLIKTSVSDCYCYNQHSQIEWTYMWSTVQVTVTSPGLLSIVYITGRHTCQHTETILSFLKCVTHNFWTAEEAKEVTIVFSPYGETVCFSVKPVGSLLTYAVSVNRNVVDFRLFLVFATGIFLFFYAKTLSQSPVFYYSSGTVLGILMTLVFVLLMTKKHIPKYSTFGALMIGCWFASVYVLCQLMENLKWLWCGNRIYVLGYVLVVGLCSFSACYSRGPPADEGSRDLLMWALRFLSLVLVYTGMAISQFAYAVMILLLLSWTRHYLLRAFSCLRWKVRQWFATRALVVRYLTDDEYREQAEAETASALEELRQACCRPDFPSWLAVSRLQAPKKFAEFVLGASHLSPEEVSTHEKQYGLGGAFLEEQLFSLQTESLPAS.

Residues 1–22 (MPPGSWWLVLWLPPLATLPAGA) form the signal peptide. 5 helical membrane-spanning segments follow: residues 147-167 (NVVDFRLFLVFATGIFLFFYA), 175-195 (VFYYSSGTVLGILMTLVFVLL), 206-226 (TFGALMIGCWFASVYVLCQLM), 232-252 (LWCGNRIYVLGYVLVVGLCSF), and 279-299 (LVLVYTGMAISQFAYAVMILL).

It belongs to the NEMP family.

It localises to the nucleus inner membrane. The chain is Nuclear envelope integral membrane protein 2 (Nemp2) from Rattus norvegicus (Rat).